Here is a 173-residue protein sequence, read N- to C-terminus: Large ribosomal subunit protein uL10 (173 aa).

It belongs to the universal ribosomal protein uL10 family. As to quaternary structure, part of the ribosomal stalk of the 50S ribosomal subunit. The N-terminus interacts with L11 and the large rRNA to form the base of the stalk. The C-terminus forms an elongated spine to which L12 dimers bind in a sequential fashion forming a multimeric L10(L12)X complex.

Functionally, forms part of the ribosomal stalk, playing a central role in the interaction of the ribosome with GTP-bound translation factors. The chain is Large ribosomal subunit protein uL10 from Cupriavidus pinatubonensis (strain JMP 134 / LMG 1197) (Cupriavidus necator (strain JMP 134)).